A 493-amino-acid chain; its full sequence is Lysine--tRNA ligase (493 aa).

Residues Glu-402 and Glu-409 each contribute to the Mg(2+) site.

It belongs to the class-II aminoacyl-tRNA synthetase family. As to quaternary structure, homodimer. It depends on Mg(2+) as a cofactor.

The protein localises to the cytoplasm. It catalyses the reaction tRNA(Lys) + L-lysine + ATP = L-lysyl-tRNA(Lys) + AMP + diphosphate. The sequence is that of Lysine--tRNA ligase from Ureaplasma urealyticum serovar 10 (strain ATCC 33699 / Western).